We begin with the raw amino-acid sequence, 143 residues long: Histone H2B.2, sperm (143 aa).

Residues 1–52 are disordered; it reads MPRSPSKSSPRKGSPRKGSPRKGSPKRGGKGAKRAGKGGRRRNVVKRRRRRR. 5 short sequence motifs (SPKK motif) span residues 4–7, 9–12, 14–17, 19–22, and 24–27; these read SPSK, SPRK, and SPKR. Positions 9–52 are enriched in basic residues; it reads SPRKGSPRKGSPRKGSPKRGGKGAKRAGKGGRRRNVVKRRRRRR. Ser14, Ser19, and Ser24 each carry phosphoserine. A glycan (O-linked (GlcNAc) serine) is linked at Ser130. Lys138 participates in a covalent cross-link: Glycyl lysine isopeptide (Lys-Gly) (interchain with G-Cter in ubiquitin).

The protein belongs to the histone H2B family. In terms of assembly, the nucleosome is a histone octamer containing two molecules each of H2A, H2B, H3 and H4 assembled in one H3-H4 heterotetramer and two H2A-H2B heterodimers. The octamer wraps approximately 147 bp of DNA. Post-translationally, monoubiquitination of Lys-138 gives a specific tag for epigenetic transcriptional activation and is also prerequisite for histone H3 'Lys-4' and 'Lys-79' methylation. Phosphorylated on SPKK motifs 3, 4 and 5; which may regulate DNA binding. Dephosphorylated during maturation of spermatids to mature sperm and rephosphorylated at fertilization. In terms of processing, glcNAcylation at Ser-130 promotes monoubiquitination of Lys-138. It fluctuates in response to extracellular glucose, and associates with transcribed genes. In terms of tissue distribution, testis-specific.

The protein localises to the nucleus. It is found in the chromosome. Functionally, core component of nucleosome. Nucleosomes wrap and compact DNA into chromatin, limiting DNA accessibility to the cellular machineries which require DNA as a template. Histones thereby play a central role in transcription regulation, DNA repair, DNA replication and chromosomal stability. DNA accessibility is regulated via a complex set of post-translational modifications of histones, also called histone code, and nucleosome remodeling. The polypeptide is Histone H2B.2, sperm (Lytechinus pictus (Painted sea urchin)).